Reading from the N-terminus, the 75-residue chain is MRQKIFFLKRFDSELLYVQGSILKSFQRFSLTLSVSTNNSKYLDFFRTGPSQIATIRSTSFYTISETQGLNRMDM.

It is found in the plastid. The protein localises to the chloroplast. This is an uncharacterized protein from Calycanthus floridus var. glaucus (Eastern sweetshrub).